Reading from the N-terminus, the 190-residue chain is UPF0301 protein Rpic_0619 (190 aa).

Belongs to the UPF0301 (AlgH) family.

This is UPF0301 protein Rpic_0619 from Ralstonia pickettii (strain 12J).